Reading from the N-terminus, the 457-residue chain is NAC domain-containing protein 69 (457 aa).

Positions 4-153 constitute an NAC domain; that stretch reads DLVGYRFYPT…NYVICQVMYK (150 aa). The DNA-binding element occupies 107-159; sequence IGIKKTLVYYEGRVPKGVWTPWVMHEYHITCLPQDQRNYVICQVMYKGEDGDV. Disordered regions lie at residues 158–180 and 302–332; these read DVPS…SNTV and DSNS…SNRQ. Positions 162 to 180 are enriched in polar residues; that stretch reads GGNNSSEPSQSLVSDSNTV. Low complexity predominate over residues 302–311; the sequence is DSNSDAESIS. Over residues 312-332 the composition is skewed to polar residues; the sequence is ATSYQGTSSPGDDSVGSSNRQ. The chain crosses the membrane as a helical span at residues 421 to 441; sequence IYLMRMIIGFILLLALISNII.

Its subcellular location is the membrane. The protein resides in the nucleus. Its function is as follows. Transcription activator activated by proteolytic cleavage through regulated intramembrane proteolysis (RIP). Involved in salt stress response during seed germination and seedling growth. Binds the auxin-responsive IAA30 gene promoter and may serve as a molecular link that interconnects a developmental feedback loop of auxin signaling with a salt signal transduction pathway during seed germination. This Arabidopsis thaliana (Mouse-ear cress) protein is NAC domain-containing protein 69 (NAC69).